Consider the following 395-residue polypeptide: Phosphopentomutase (395 aa).

Mn(2+) contacts are provided by aspartate 13, aspartate 288, histidine 293, aspartate 329, histidine 330, and histidine 341.

It belongs to the phosphopentomutase family. Requires Mn(2+) as cofactor.

The protein localises to the cytoplasm. It catalyses the reaction 2-deoxy-alpha-D-ribose 1-phosphate = 2-deoxy-D-ribose 5-phosphate. The catalysed reaction is alpha-D-ribose 1-phosphate = D-ribose 5-phosphate. The protein operates within carbohydrate degradation; 2-deoxy-D-ribose 1-phosphate degradation; D-glyceraldehyde 3-phosphate and acetaldehyde from 2-deoxy-alpha-D-ribose 1-phosphate: step 1/2. In terms of biological role, isomerase that catalyzes the conversion of deoxy-ribose 1-phosphate (dRib-1-P) and ribose 1-phosphate (Rib-1-P) to deoxy-ribose 5-phosphate (dRib-5-P) and ribose 5-phosphate (Rib-5-P), respectively. This is Phosphopentomutase from Agathobacter rectalis (strain ATCC 33656 / DSM 3377 / JCM 17463 / KCTC 5835 / VPI 0990) (Eubacterium rectale).